Here is a 683-residue protein sequence, read N- to C-terminus: Amphiphysin (683 aa).

Coiled coils occupy residues 10–83 (AKNV…SLHE) and 144–191 (DYDS…QEEL). One can recognise a BAR domain in the interval 24 to 240 (VLQKLGKADE…MTKLGDQHAD (217 aa)). Disordered regions lie at residues 244 to 311 (SIQG…KVTP), 421 to 443 (AETE…AAAP), and 455 to 599 (EPKE…ASLS). Ser-252 is subject to Phosphoserine. Thr-260 is subject to Phosphothreonine. Positions 261–274 (PSPPEEASPLPSPT) are enriched in pro residues. 4 positions are modified to phosphoserine: Ser-262, Ser-268, Ser-272, and Ser-276. The residue at position 280 (Thr-280) is a Phosphothreonine. Low complexity-rich tracts occupy residues 424-443 (EQAL…AAAP) and 468-477 (AGETVGTEGS). The residue at position 496 (Ser-496) is a Phosphoserine. Residues 539–559 (SNHEGEEHQETTTGTETREAT) show a composition bias toward basic and acidic residues. The span at 585 to 596 (AATPAPAGAVDA) shows a compositional bias: low complexity. One can recognise an SH3 domain in the interval 610–683 (GFLYKVETLH…FPENFTRHLE (74 aa)). Ser-626 carries the post-translational modification Phosphoserine.

Heterodimer with BIN1. Binds SH3GLB1. Interacts with REPS1 and SGIP1. Binds AP2A2. Interacts with AP2B1. Interacts with DNM1 and SYNJ1.

It localises to the cytoplasmic vesicle. The protein resides in the secretory vesicle. Its subcellular location is the synaptic vesicle membrane. The protein localises to the cytoplasm. It is found in the cytoskeleton. Its function is as follows. May participate in mechanisms of regulated exocytosis in synapses and certain endocrine cell types. May control the properties of the membrane associated cytoskeleton. The protein is Amphiphysin (Amph) of Rattus norvegicus (Rat).